Consider the following 472-residue polypeptide: Succinate-semialdehyde dehydrogenase [NADP(+)] (472 aa).

Residues 134 to 135 (WN), 158 to 161 (KHAS), and 210 to 211 (GS) each bind NADP(+). Glu232 serves as the catalytic Proton acceptor. Leu233 provides a ligand contact to NADP(+). Catalysis depends on Cys266, which acts as the Nucleophile. Glu363 serves as a coordination point for NADP(+).

It belongs to the aldehyde dehydrogenase family.

It catalyses the reaction succinate semialdehyde + NADP(+) + H2O = succinate + NADPH + 2 H(+). Its function is as follows. Catalyzes the NADP(+)-dependent oxidation of succinate semialdehyde to succinate. It is believed to be the main source of succinate semialdehyde dehydrogenase activity in Mycobacterium. The polypeptide is Succinate-semialdehyde dehydrogenase [NADP(+)] (gabD1) (Mycolicibacterium paratuberculosis (strain ATCC BAA-968 / K-10) (Mycobacterium paratuberculosis)).